Here is a 1008-residue protein sequence, read N- to C-terminus: Pre-mRNA-splicing factor SNU114 (1008 aa).

Residue serine 85 is modified to Phosphoserine. The residue at position 88 (threonine 88) is a Phosphothreonine. The tr-type G domain occupies 131–338 (ERIINVGVIG…SYYYAHSIPS (208 aa)). The interval 140–147 (GPLHSGKT) is G1. 140 to 147 (GPLHSGKT) is a GTP binding site. The tract at residues 188–192 (GLSIK) is G2. The G3 stretch occupies residues 214 to 217 (DAPG). Residues 214-218 (DAPGH) and 268-271 (NKLD) contribute to the GTP site. Residues 268-271 (NKLD) form a G4 region. The interval 315-317 (STK) is G5. The disordered stretch occupies residues 504–536 (TSQSESRQKRQLHDISKTETSNEDEDEDDETPS). Positions 509–520 (SRQKRQLHDISK) are enriched in basic and acidic residues. The span at 524–536 (SNEDEDEDDETPS) shows a compositional bias: acidic residues.

Belongs to the TRAFAC class translation factor GTPase superfamily. Classic translation factor GTPase family. EF-G/EF-2 subfamily. As to quaternary structure, belongs to the CWC complex (or CEF1-associated complex), a spliceosome sub-complex reminiscent of a late-stage spliceosome composed of the U2, U5 and U6 snRNAs and at least BUD13, BUD31, BRR2, CDC40, CEF1, CLF1, CUS1, CWC2, CWC15, CWC21, CWC22, CWC23, CWC24, CWC25, CWC27, ECM2, HSH155, IST3, ISY1, LEA1, MSL1, NTC20, PRP8, PRP9, PRP11, PRP19, PRP21, PRP22, PRP45, PRP46, SLU7, SMB1, SMD1, SMD2, SMD3, SMX2, SMX3, SNT309, SNU114, SPP2, SYF1, SYF2, RSE1 and YJU2. Component of the U4/U6-U5 tri-snRNP complex composed of the U4, U6 and U5 snRNAs and at least PRP3, PRP4, PRP6, PRP8, PRP18, PRP31, PRP38, SNU13, SNU23, SNU66, SNU114, SPP381, SMB1, SMD1, SMD2, SMD3, SMX2, SMX3, LSM2, LSM3, LSM4, LSM5, LSM6, LSM7, LSM8, BRR2 and DIB1. Interacts (via C-terminus) with CWC21. Interacts (via N-terminus) with PRP8 (via SCwid domain).

It is found in the nucleus. Component of the U5 snRNP complex required for pre-mRNA splicing. Binds GTP. The sequence is that of Pre-mRNA-splicing factor SNU114 (SNU114) from Saccharomyces cerevisiae (strain ATCC 204508 / S288c) (Baker's yeast).